Consider the following 240-residue polypeptide: MGLELYLDLLSQPCRAIYIFAKKNRIPFELRTVDLRKGQHLSDAFAQVNPLQKVPILKDGDFILTESVAILLYLARKYKVPDHWYPQDLQACARVDEYLAWQHTALRRNCLRALWHKVMLPVFLGEPVSPEMLATTLAELDMALQVLEGKFLQDKAFLTGSHISLADLVAITELMHPVGAGCQVFKGRPKLAAWRQRVEAAVGEVLFQEAHEVILKAKDSQPADPTLKQKMLPKVLAMIQ.

The region spanning 2 to 82 is the GST N-terminal domain; it reads GLELYLDLLS…YLARKYKVPD (81 aa). Residues His40, 53-54, and 66-67 each bind glutathione; these read KV and ES. A GST C-terminal domain is found at 88–226; the sequence is DLQACARVDE…AKDSQPADPT (139 aa).

It belongs to the GST superfamily. Theta family. Homodimer.

The protein resides in the cytoplasm. The enzyme catalyses RX + glutathione = an S-substituted glutathione + a halide anion + H(+). In terms of biological role, conjugation of reduced glutathione to a wide number of exogenous and endogenous hydrophobic electrophiles. Also binds steroids, bilirubin, carcinogens and numerous organic anions. Has dichloromethane dehalogenase activity. This is Glutathione S-transferase theta-1 (GSTT1) from Bos taurus (Bovine).